A 473-amino-acid polypeptide reads, in one-letter code: Photosystem II CP43 reaction center protein (473 aa).

Residues Met-1–Glu-14 constitute a propeptide that is removed on maturation. At Thr-15 the chain carries N-acetylthreonine. The residue at position 15 (Thr-15) is a Phosphothreonine. A run of 5 helical transmembrane segments spans residues Leu-69–Ala-93, Leu-134–Asn-155, Lys-178–Thr-200, Lys-255–Ser-275, and Trp-291–Ala-312. Glu-367 lines the [CaMn4O5] cluster pocket. A helical membrane pass occupies residues Arg-447–Pro-471.

Belongs to the PsbB/PsbC family. PsbC subfamily. In terms of assembly, PSII is composed of 1 copy each of membrane proteins PsbA, PsbB, PsbC, PsbD, PsbE, PsbF, PsbH, PsbI, PsbJ, PsbK, PsbL, PsbM, PsbT, PsbX, PsbY, PsbZ, Psb30/Ycf12, at least 3 peripheral proteins of the oxygen-evolving complex and a large number of cofactors. It forms dimeric complexes. Binds multiple chlorophylls and provides some of the ligands for the Ca-4Mn-5O cluster of the oxygen-evolving complex. It may also provide a ligand for a Cl- that is required for oxygen evolution. PSII binds additional chlorophylls, carotenoids and specific lipids. serves as cofactor.

Its subcellular location is the plastid. The protein localises to the chloroplast thylakoid membrane. One of the components of the core complex of photosystem II (PSII). It binds chlorophyll and helps catalyze the primary light-induced photochemical processes of PSII. PSII is a light-driven water:plastoquinone oxidoreductase, using light energy to abstract electrons from H(2)O, generating O(2) and a proton gradient subsequently used for ATP formation. This chain is Photosystem II CP43 reaction center protein, found in Gnetum parvifolium (Small-leaved jointfir).